A 294-amino-acid polypeptide reads, in one-letter code: Acetyl-coenzyme A carboxylase carboxyl transferase subunit beta (294 aa).

Residues valine 25–histidine 294 enclose the CoA carboxyltransferase N-terminal domain. Zn(2+) contacts are provided by cysteine 29, cysteine 32, cysteine 48, and cysteine 51. The C4-type zinc-finger motif lies at cysteine 29–cysteine 51.

This sequence belongs to the AccD/PCCB family. As to quaternary structure, acetyl-CoA carboxylase is a heterohexamer composed of biotin carboxyl carrier protein (AccB), biotin carboxylase (AccC) and two subunits each of ACCase subunit alpha (AccA) and ACCase subunit beta (AccD). Zn(2+) is required as a cofactor.

The protein localises to the cytoplasm. The catalysed reaction is N(6)-carboxybiotinyl-L-lysyl-[protein] + acetyl-CoA = N(6)-biotinyl-L-lysyl-[protein] + malonyl-CoA. The protein operates within lipid metabolism; malonyl-CoA biosynthesis; malonyl-CoA from acetyl-CoA: step 1/1. Its function is as follows. Component of the acetyl coenzyme A carboxylase (ACC) complex. Biotin carboxylase (BC) catalyzes the carboxylation of biotin on its carrier protein (BCCP) and then the CO(2) group is transferred by the transcarboxylase to acetyl-CoA to form malonyl-CoA. The sequence is that of Acetyl-coenzyme A carboxylase carboxyl transferase subunit beta from Aliivibrio fischeri (strain ATCC 700601 / ES114) (Vibrio fischeri).